The chain runs to 418 residues: Synaptotagmin-15 (418 aa).

At 1 to 4 (MAEQ) the chain is on the extracellular side. Residues 5 to 27 (LAFLIGGIIGGLLLLIGVSCCLW) traverse the membrane as a helical; Signal-anchor for type III membrane protein segment. The Cytoplasmic segment spans residues 28 to 418 (RRFCATFTYE…WHALCRPTEP (391 aa)). C2 domains are found at residues 144-261 (CLGR…HRII) and 275-396 (EFGD…EHWG).

It belongs to the synaptotagmin family. As to quaternary structure, homodimer. Isoform 1 and isoform 2 are expressed in heart, lung, skeletal muscle and testis; not detected in brain, liver and kidney. Isoform 1 is expressed in spleen.

It localises to the membrane. Functionally, may be involved in the trafficking and exocytosis of secretory vesicles in non-neuronal tissues. The protein is Synaptotagmin-15 (Syt15) of Mus musculus (Mouse).